The sequence spans 947 residues: DNA mismatch repair protein MutS (947 aa).

620 to 627 (GPNMSGKS) lines the ATP pocket.

This sequence belongs to the DNA mismatch repair MutS family.

In terms of biological role, this protein is involved in the repair of mismatches in DNA. It is possible that it carries out the mismatch recognition step. This protein has a weak ATPase activity. This chain is DNA mismatch repair protein MutS, found in Clostridioides difficile (strain 630) (Peptoclostridium difficile).